The following is a 423-amino-acid chain: Putative competence-damage inducible protein (423 aa).

Belongs to the CinA family.

This chain is Putative competence-damage inducible protein, found in Streptococcus pyogenes serotype M49 (strain NZ131).